Consider the following 170-residue polypeptide: Acetyl-CoA decarbonylase/synthase complex subunit epsilon 1 (170 aa).

Belongs to the CdhB family. Heterotetramer of two alpha and two epsilon subunits. The ACDS complex is made up of alpha, epsilon, beta, gamma and delta subunits with a probable stoichiometry of (alpha(2)epsilon(2))(4)-beta(8)-(gamma(1)delta(1))(8).

Its pathway is one-carbon metabolism; methanogenesis from acetate. Functionally, part of a complex that catalyzes the reversible cleavage of acetyl-CoA, allowing growth on acetate as sole source of carbon and energy. The alpha-epsilon subcomponent functions as a carbon monoxide dehydrogenase. The precise role of the epsilon subunit is unclear; it may have a stabilizing role within the alpha(2)epsilon(2) component and/or be involved in electron transfer to FAD during a potential FAD-mediated CO oxidation. This Methanosarcina thermophila protein is Acetyl-CoA decarbonylase/synthase complex subunit epsilon 1 (cdhB1).